A 50-amino-acid chain; its full sequence is Protein HokE (50 aa).

The chain crosses the membrane as a helical span at residues Tyr5–Gly25.

It belongs to the Hok/Gef family.

It is found in the cell inner membrane. Its function is as follows. Toxic component of a type I toxin-antitoxin (TA) system. When overexpressed kills cells within minutes; causes collapse of the transmembrane potential and arrest of respiration. Its toxic effect is probably neutralized by an antisense antitoxin Sok RNA. The protein is Protein HokE (hokE) of Escherichia coli O157:H7.